The chain runs to 182 residues: CDP-diacylglycerol--glycerol-3-phosphate 3-phosphatidyltransferase (182 aa).

The Cytoplasmic segment spans residues 2 to 12 (QFNIPTLLTLF). Residues 13-37 (RVILIPFFVLVFYLPVTWSPFAAAL) form a helical membrane-spanning segment. Over 38 to 60 (IFCVAAVTDWFDGFLARRWNQST) the chain is Periplasmic. Residues 61-81 (RFGAFLDPVADKVLVAIAMVL) traverse the membrane as a helical segment. The Cytoplasmic portion of the chain corresponds to 82-86 (VTEHY). A helical transmembrane segment spans residues 87-107 (HSWWVTLPAATMIAREIIISA). At 108 to 145 (LREWMAELGKRSSVAVSWIGKVKTTAQMVALAWLLWRP) the chain is on the periplasmic side. The helical transmembrane segment at 146 to 168 (NIWVEYAGIALFFVAAVLTLWSM) threads the bilayer. At 169–181 (LQYLSAARADLLD) the chain is on the cytoplasmic side.

Belongs to the CDP-alcohol phosphatidyltransferase class-I family.

Its subcellular location is the cell inner membrane. The catalysed reaction is a CDP-1,2-diacyl-sn-glycerol + sn-glycerol 3-phosphate = a 1,2-diacyl-sn-glycero-3-phospho-(1'-sn-glycero-3'-phosphate) + CMP + H(+). It participates in phospholipid metabolism; phosphatidylglycerol biosynthesis; phosphatidylglycerol from CDP-diacylglycerol: step 1/2. Its function is as follows. Catalyzes the conversion of cytidine diphosphate diacylglycerol (CDP-DG) and glycerol 3-phosphate into phosphatidylglycerol. Essential for the synthesis of anionic phospholipids, thereby playing a role in balancing the ratio of zwitterionic and anionic phospholipids, which is thought to be important for normal membrane function. In Shigella sonnei (strain Ss046), this protein is CDP-diacylglycerol--glycerol-3-phosphate 3-phosphatidyltransferase.